The primary structure comprises 270 residues: Transcription factor bHLH113 (270 aa).

The disordered stretch occupies residues 109–153; sequence CTVDKSTKSSTKKRTGTGNGQESDQNRKPGKKGKRNQEKSSVGIA. Residues 144-193 form the bHLH domain; the sequence is NQEKSSVGIAKVRKERLGERIAALQQLVSPYGKTDAASVLHEAMGYIKFL.

As to quaternary structure, homodimer.

Its subcellular location is the nucleus. The sequence is that of Transcription factor bHLH113 (BHLH113) from Arabidopsis thaliana (Mouse-ear cress).